Here is a 215-residue protein sequence, read N- to C-terminus: Rho-related GTP-binding protein RhoF (215 aa).

Methionine 1 bears the N-acetylmethionine mark. 30–37 contributes to the GTP binding site; that stretch reads GDGGCGKT. An Effector region motif is present at residues 52–60; sequence YAPSVFEKY. Residues 77 to 81 and 135 to 138 each bind GTP; these read DTAGQ and CKTD. Cysteine 212 is subject to Cysteine methyl ester. Residue cysteine 212 is the site of S-geranylgeranyl cysteine attachment. The propeptide at 213-215 is removed in mature form; it reads LLL.

This sequence belongs to the small GTPase superfamily. Rho family.

Its subcellular location is the cell membrane. The protein resides in the cytoplasm. It is found in the cytoskeleton. Functionally, plasma membrane-associated small GTPase which cycles between an active GTP-bound and an inactive GDP-bound state. Causes the formation of thin, actin-rich surface projections called filopodia. Functions cooperatively with CDC42 and Rac to generate additional structures, increasing the diversity of actin-based morphology. This Bos taurus (Bovine) protein is Rho-related GTP-binding protein RhoF (RHOF).